The sequence spans 230 residues: Small ribosomal subunit protein uS3 (230 aa).

One can recognise a KH type-2 domain in the interval 39 to 107 (VRKFLVEKLQ…PAQINIAEIR (69 aa)).

It belongs to the universal ribosomal protein uS3 family. As to quaternary structure, part of the 30S ribosomal subunit. Forms a tight complex with proteins S10 and S14.

Functionally, binds the lower part of the 30S subunit head. Binds mRNA in the 70S ribosome, positioning it for translation. The chain is Small ribosomal subunit protein uS3 from Shewanella baltica (strain OS223).